A 420-amino-acid chain; its full sequence is Tyrosine--tRNA ligase (420 aa).

Y39 is a binding site for L-tyrosine. Positions 44–53 (CTAPSLHIGS) match the 'HIGH' region motif. L-tyrosine-binding residues include Y176 and Q180. A 'KMSKS' region motif is present at residues 236-240 (KMGKT). Position 239 (K239) interacts with ATP. The S4 RNA-binding domain maps to 349–414 (IPLIDLLYDT…AGKKRHIKIL (66 aa)).

It belongs to the class-I aminoacyl-tRNA synthetase family. TyrS type 1 subfamily. As to quaternary structure, homodimer.

The protein resides in the cytoplasm. It catalyses the reaction tRNA(Tyr) + L-tyrosine + ATP = L-tyrosyl-tRNA(Tyr) + AMP + diphosphate + H(+). Catalyzes the attachment of tyrosine to tRNA(Tyr) in a two-step reaction: tyrosine is first activated by ATP to form Tyr-AMP and then transferred to the acceptor end of tRNA(Tyr). In Wolbachia pipientis subsp. Culex pipiens (strain wPip), this protein is Tyrosine--tRNA ligase.